The sequence spans 1079 residues: MEDEAVLDRGASFLKHVCDEEEVEGHHTIYIGVHVPKSYRRRRRHKRKTGHKEKREKERISENYSDKSDVENADESSSSILKPLISPAAERIRFILGEEDDSPAPPQLFTELDELLAVDGQEMEWKETARWIKFEEKVEQGGERWSKPHVATLSLHSLFELRTCMEKGSIMLDREATSLPQLVEMIVDHQIETGLLKPDLKDKVTYTLLRKHRHQTKKSNLRSLADIGKTVSSASRMFTSPDNGSPAMTHRNLTSSSLNDISDKPEKDQLKNKFMKKLPRDAEASNVLVGEVDFLDTPFIAFVRLQQAVMLGALTEVPVPTRFLFILLGPKGKAKSYHEIGRAIATLMSDEVFHDIAYKAKDRHDLIAGIDEFLDEVIVLPPGEWDPAIRIEPPKSLPSSDKRKNMYSGGENVQMNGDTPHDGGHGGGGHADCEELQRTGRFCGGLIKDLKRKAPFFASDFYDALNIQSLSAILFIYLATVTNAITFGGLLGDATDNMQGVLESFLGTAVSGAIFCLFAGQPLTILSSTGPVLVFERLLFNFSKDHNFDYLEFRLWIGLWSAFLCLILVATDASFLVQYFTRFTEEGFSSLISFIFIYDAFKKMIKLADYYPINSDFKVGYNTFFSCACVPPDPVNISIANDTTPAPQELSAVSSTDMHQNATFDWAFLSKKECLRYGGKLVGNNCNFVPDVTLMSFILFLGTYTSSMALKKFKTSRYFPTTARKLISDFAIILSILIFCVIDALVGVDTPKLIVPSEFKPTSPNRGWFVPPFGGNPWWVYLAAAIPALLVTILIFMDQQITAVIVNRKEHKLKKGAGYHLDLFWVAILMVVCSFMALPWYVAATVISIAHIDSLKMETETSAPGEQPKFLGVREQRVTGTLVFILTGLSVFMAPILKFIPMPVLYGVFLYMGVASLNGVQFMDRLKLLLMPLKHQPDFIYLRHVPLRRVHLFTFLQVLCLALLWILKSTVAAIIFPVMILALVAVRKGMDYLFSQHDLSFLDDVIPEKDKKKKEDEKKKKKKKGSLDSDNDDSDCPYSEKVPSIKIPMDIMEQQPFLSESKPSDREKSSTFLERHTSC.

The segment at 1-62 (MEDEAVLDRG…EKREKERISE (62 aa)) is required for interaction with AHCYL1. Residues 1 to 466 (MEDEAVLDRG…FASDFYDALN (466 aa)) lie on the Cytoplasmic side of the membrane. Residue Y30 is modified to Phosphotyrosine. The segment covering 39–52 (YRRRRRHKRKTGHK) has biased composition (basic residues). The disordered stretch occupies residues 39–78 (YRRRRRHKRKTGHKEKREKERISENYSDKSDVENADESSS). Residue T49 is modified to Phosphothreonine; by PKA. Residues 53 to 70 (EKREKERISENYSDKSDV) show a composition bias toward basic and acidic residues. Residues S61, S65, S68, S223, S232, S233, and S245 each carry the phosphoserine modification. Positions 237–265 (MFTSPDNGSPAMTHRNLTSSSLNDISDKP) are disordered. T249 and T254 each carry phosphothreonine. Polar residues predominate over residues 251-260 (RNLTSSSLND). Residues S256, S257, and S262 each carry the phosphoserine modification. A helical transmembrane segment spans residues 467-491 (IQSLSAILFIYLATVTNAITFGGLL). Residues 492–501 (GDATDNMQGV) lie on the Extracellular side of the membrane. A helical membrane pass occupies residues 502-520 (LESFLGTAVSGAIFCLFAG). Q521 is a topological domain (cytoplasmic). The discontinuously helical transmembrane segment at 522 to 542 (PLTILSSTGPVLVFERLLFNF) threads the bilayer. Topologically, residues 543-550 (SKDHNFDY) are extracellular. Residues 551–571 (LEFRLWIGLWSAFLCLILVAT) form a helical membrane-spanning segment. At 572–585 (DASFLVQYFTRFTE) the chain is on the cytoplasmic side. The helical transmembrane segment at 586–609 (EGFSSLISFIFIYDAFKKMIKLAD) threads the bilayer. Residues 610–692 (YYPINSDFKV…GNNCNFVPDV (83 aa)) are Extracellular-facing. The chain crosses the membrane as a helical span at residues 693-710 (TLMSFILFLGTYTSSMAL). Residues 711–725 (KKFKTSRYFPTTARK) are Cytoplasmic-facing. The helical transmembrane segment at 726 to 745 (LISDFAIILSILIFCVIDAL) threads the bilayer. Residues 746-779 (VGVDTPKLIVPSEFKPTSPNRGWFVPPFGGNPWW) lie on the Extracellular side of the membrane. Residues 748–779 (VDTPKLIVPSEFKPTSPNRGWFVPPFGGNPWW) are interaction with CA4. A helical membrane pass occupies residues 780-807 (VYLAAAIPALLVTILIFMDQQITAVIVN). Residues 808-819 (RKEHKLKKGAGY) lie on the Cytoplasmic side of the membrane. A helical membrane pass occupies residues 820 to 836 (HLDLFWVAILMVVCSFM). Position 837 (A837) is a topological domain, extracellular. Residues 838 to 855 (LPWYVAATVISIAHIDSL) form a discontinuously helical membrane-spanning segment. Over 856-877 (KMETETSAPGEQPKFLGVREQR) the chain is Cytoplasmic. Residues 878-894 (VTGTLVFILTGLSVFMA) traverse the membrane as a helical segment. The Extracellular portion of the chain corresponds to 895-901 (PILKFIP). A helical membrane pass occupies residues 902–918 (MPVLYGVFLYMGVASLN). The Cytoplasmic portion of the chain corresponds to 919–960 (GVQFMDRLKLLLMPLKHQPDFIYLRHVPLRRVHLFTFLQVLC). An intramembrane region (discontinuously helical) is located at residues 961-986 (LALLWILKSTVAAIIFPVMILALVAV). The Cytoplasmic segment spans residues 987–1079 (RKGMDYLFSQ…STFLERHTSC (93 aa)). The segment at 1002-1004 (LDD) is CA2-binding. Residues 1012–1079 (KKKEDEKKKK…STFLERHTSC (68 aa)) are disordered. At S1026 the chain carries Phosphoserine; by PKA. S1029 bears the Phosphoserine mark. The interval 1030 to 1033 (DNDD) is CA2-binding. Phosphoserine is present on residues S1034 and S1044. Positions 1057–1059 (FLS) are required for basolateral targeting. A compositionally biased stretch (basic and acidic residues) spans 1062 to 1079 (KPSDREKSSTFLERHTSC). S1069 is modified (phosphoserine).

Belongs to the anion exchanger (TC 2.A.31) family. In terms of assembly, homodimer. Interacts with CA2/carbonic anhydrase 2 and CA4/carbonic anhydrase 4 which may regulate transporter activity. Isoform 1 but not isoform 2 interacts with AHCYL1 (via PEST domain when phosphorylated); the interaction increases SLC4A4 isoform 1 activity. Interacts with AHCYL2. Phosphorylation of Ser-1026 by PKA increases the binding of CA2 and changes the Na(+):HCO3(-) stoichiometry of the transporter from 3:1 to 2:1. Phosphorylated in presence of STK39 and dephosphorylated in presence of PP1 phosphatase; phosphorylation seems to inhibit SLC4A4 activity. In terms of processing, N-glycosylated. May not be necessary for the transporter basic functions. As to expression, expressed in colonic mucosa, kidney cortex and to gastric mucosa.

Its subcellular location is the basolateral cell membrane. It is found in the cell membrane. The catalysed reaction is 2 hydrogencarbonate(out) + Na(+)(out) = 2 hydrogencarbonate(in) + Na(+)(in). It catalyses the reaction 3 hydrogencarbonate(out) + Na(+)(out) = 3 hydrogencarbonate(in) + Na(+)(in). In terms of biological role, electrogenic sodium/bicarbonate cotransporter with a Na(+):HCO3(-) stoichiometry varying from 1:2 to 1:3. May regulate bicarbonate influx/efflux at the basolateral membrane of cells and regulate intracellular pH. The polypeptide is Electrogenic sodium bicarbonate cotransporter 1 (SLC4A4) (Oryctolagus cuniculus (Rabbit)).